A 151-amino-acid polypeptide reads, in one-letter code: Probable cGMP 3',5'-cyclic phosphodiesterase subunit delta (151 aa).

It belongs to the PDE6D/unc-119 family. In terms of assembly, interacts with Pde6.

It localises to the nucleus. The protein localises to the cytoplasm. The sequence is that of Probable cGMP 3',5'-cyclic phosphodiesterase subunit delta from Drosophila erecta (Fruit fly).